We begin with the raw amino-acid sequence, 164 residues long: Diphosphoinositol polyphosphate phosphohydrolase 3-beta (164 aa).

Substrate is bound by residues arginine 9, 17 to 19 (KKR), and 38 to 40 (SSR). Positions 17-144 (KKRAACLCFR…VHAEYLEKLK (128 aa)) constitute a Nudix hydrolase domain. Residues glycine 49 and glutamate 65 each contribute to the Mg(2+) site. The Nudix box motif lies at 50–71 (GGMEPEEEPGGAAVREVYEEAG). Glutamate 68 (proton acceptor) is an active-site residue. Glutamate 69 serves as a coordination point for Mg(2+). Residues 89–91 (RKH), arginine 115, and lysine 133 contribute to the substrate site. The interval 144–164 (KLGGSPTNGNSMAPSSPDSDP) is disordered. Over residues 148–164 (SPTNGNSMAPSSPDSDP) the composition is skewed to polar residues.

Belongs to the Nudix hydrolase family. DIPP subfamily. Requires Mg(2+) as cofactor. It depends on Mn(2+) as a cofactor. In terms of tissue distribution, mainly expressed in testis and, at lower level in brain. According to PubMed:12121577, it is also expressed in pancreas and weakly expressed in thymus, prostate, ovary, lung, small intestine and heart.

It is found in the cytoplasm. It carries out the reaction diphospho-myo-inositol polyphosphate + H2O = myo-inositol polyphosphate + phosphate.. The catalysed reaction is P(1),P(6)-bis(5'-adenosyl) hexaphosphate + H2O = adenosine 5'-pentaphosphate + AMP + 2 H(+). It catalyses the reaction P(1),P(5)-bis(5'-adenosyl) pentaphosphate + H2O = adenosine 5'-tetraphosphate + AMP + 2 H(+). Functionally, cleaves a beta-phosphate from the diphosphate groups in PP-InsP5 (diphosphoinositol pentakisphosphate), suggesting that it may play a role in signal transduction. Also able to catalyze the hydrolysis of dinucleoside oligophosphates, with Ap6A and Ap5A being the preferred substrates. The major reaction products are ADP and p4a from Ap6A and ADP and ATP from Ap5A. Also able to hydrolyze 5-phosphoribose 1-diphosphate. The polypeptide is Diphosphoinositol polyphosphate phosphohydrolase 3-beta (Homo sapiens (Human)).